The following is a 95-amino-acid chain: Mitochondrial import inner membrane translocase subunit Tim13 (95 aa).

A Twin CX3C motif motif is present at residues 46–69; that stretch reads CFKKCIGKPGSTLDNSEQKCIAMC. Intrachain disulfides connect C46–C69 and C50–C65.

The protein belongs to the small Tim family. As to quaternary structure, heterohexamer; composed of 3 copies of TIMM8 (TIMM8A or TIMM8B) and 3 copies of TIMM13, named soluble 70 kDa complex. Associates with the TIM22 complex, whose core is composed of TIMM22.

Its subcellular location is the mitochondrion inner membrane. In terms of biological role, mitochondrial intermembrane chaperone that participates in the import and insertion of some multi-pass transmembrane proteins into the mitochondrial inner membrane. Also required for the transfer of beta-barrel precursors from the TOM complex to the sorting and assembly machinery (SAM complex) of the outer membrane. Acts as a chaperone-like protein that protects the hydrophobic precursors from aggregation and guide them through the mitochondrial intermembrane space. The TIMM8-TIMM13 complex mediates the import of some proteins while the predominant TIMM9-TIMM10 70 kDa complex mediates the import of much more proteins. This chain is Mitochondrial import inner membrane translocase subunit Tim13 (timm13), found in Danio rerio (Zebrafish).